The chain runs to 927 residues: Heat shock protein hsp98 (927 aa).

The Clp R domain occupies 2 to 162 (TSKMEFTDRA…TDAIQAIRGT (161 aa)). Repeat stretches follow at residues 7–87 (FTDR…LVRL) and 99–162 (MAPS…IRGT). The tract at residues 179–428 (LAKFTIDMTA…AVRVARESQP (250 aa)) is NBD1. 224 to 231 (GEPGVGKT) contributes to the ATP binding site. A coiled-coil region spans residues 429 to 553 (EIIDSLERKL…AALNAAAAET (125 aa)). The tract at residues 454 to 473 (EASKARLEQAKKDAENVEEE) is disordered. Positions 562-752 (VGPDQINEIV…IVVMTSNLGA (191 aa)) are NBD2. 635-642 (GPSGTGKT) is an ATP binding site. The interval 908–927 (EDAVDEVAPESEMDEDLYDD) is disordered.

It belongs to the ClpA/ClpB family. Homohexamer, forming a ring with a central pore.

The protein localises to the cytoplasm. It is found in the nucleus. Its function is as follows. Required, in concert with Hsp40 and Hsp70 and small Hsps, for the dissociation, resolubilization and refolding of aggregates of damaged proteins after heat or other environmental stresses. Extracts proteins from aggregates by unfolding and threading them in an ATP-dependent process through the axial channel of the protein hexamer, after which they can be refolded by components of the Hsp70/Hsp40 chaperone system. The protein is Heat shock protein hsp98 (hsp98) of Neurospora crassa (strain ATCC 24698 / 74-OR23-1A / CBS 708.71 / DSM 1257 / FGSC 987).